The chain runs to 107 residues: Essential MCU regulator, mitochondrial (107 aa).

The transit peptide at 1–47 (MASGAARWLALVRVGSGASRSWLSLRKGGDVSAGRSCSGQSLVPTRS) directs the protein to the mitochondrion. The Mitochondrial matrix segment spans residues 48 to 65 (VIVTRSGAILPKPVKMSF). Residues 66 to 85 (GLLRVFSIVIPFLYVGTLIS) form a helical membrane-spanning segment. Positions 81–85 (GTLIS) match the GXXXX[G/A/S] motif. The Mitochondrial intermembrane segment spans residues 86–107 (KNFAALLEEHDIFVPEDDDDDD).

The protein belongs to the SMDT1/EMRE family. As to quaternary structure, component of the uniplex complex, composed of MCU, EMRE/SMDT1, MICU1 and MICU2 (or MICU3) in a 4:4:1:1 stoichiometry. The number of EMRE/SMDT1 molecules is hovewer variable, ranging from 1 to 4 copies per uniplex complex, leading to uniplex complexes with distinct gatekeeping profiles. Interacts (via its C-terminal poly-Asp tail) with MCUR1; the interaction is direct. Unprocessed form interacts (via transit peptide) with MAIP1. In terms of processing, undergoes proteolytic degradation in neurons: degraded by AFG3L2 and SPG7 before SMDT1/EMRE assembly with the uniporter complex, limiting the availability of SMDT1/EMRE for MCU assembly and promoting efficient assembly of gatekeeper subunits with MCU.

It localises to the mitochondrion inner membrane. In terms of biological role, essential regulatory subunit of the mitochondrial calcium uniporter complex (uniplex), a complex that mediates calcium uptake into mitochondria. Required to bridge the calcium-sensing proteins MICU1 with the calcium-conducting subunit MCU. Acts by mediating activation of MCU and retention of MICU1 to the MCU pore, in order to ensure tight regulation of the uniplex complex and appropriate responses to intracellular calcium signaling. The chain is Essential MCU regulator, mitochondrial from Bos taurus (Bovine).